We begin with the raw amino-acid sequence, 81 residues long: Cytochrome b559 subunit alpha (81 aa).

A helical membrane pass occupies residues 21–35; it reads VIHALTIPALFLAGW. His-23 provides a ligand contact to heme.

The protein belongs to the PsbE/PsbF family. As to quaternary structure, heterodimer of an alpha subunit and a beta subunit. PSII is composed of 1 copy each of membrane proteins PsbA, PsbB, PsbC, PsbD, PsbE, PsbF, PsbH, PsbI, PsbJ, PsbK, PsbL, PsbM, PsbT, PsbX, PsbY, PsbZ, Psb30/Ycf12, peripheral proteins PsbO, CyanoQ (PsbQ), PsbU, PsbV and a large number of cofactors. It forms dimeric complexes. It depends on heme b as a cofactor.

Its subcellular location is the cellular thylakoid membrane. This b-type cytochrome is tightly associated with the reaction center of photosystem II (PSII). PSII is a light-driven water:plastoquinone oxidoreductase that uses light energy to abstract electrons from H(2)O, generating O(2) and a proton gradient subsequently used for ATP formation. It consists of a core antenna complex that captures photons, and an electron transfer chain that converts photonic excitation into a charge separation. The chain is Cytochrome b559 subunit alpha from Synechococcus sp. (strain JA-2-3B'a(2-13)) (Cyanobacteria bacterium Yellowstone B-Prime).